We begin with the raw amino-acid sequence, 250 residues long: 2,3-bisphosphoglycerate-dependent phosphoglycerate mutase (250 aa).

Substrate is bound by residues 10–17 (RHGESQWN), 23–24 (TG), arginine 62, 89–92 (ERHY), lysine 100, 116–117 (RR), and 185–186 (GN). Histidine 11 functions as the Tele-phosphohistidine intermediate in the catalytic mechanism. Glutamate 89 functions as the Proton donor/acceptor in the catalytic mechanism.

This sequence belongs to the phosphoglycerate mutase family. BPG-dependent PGAM subfamily. In terms of assembly, homodimer.

The enzyme catalyses (2R)-2-phosphoglycerate = (2R)-3-phosphoglycerate. It functions in the pathway carbohydrate degradation; glycolysis; pyruvate from D-glyceraldehyde 3-phosphate: step 3/5. Functionally, catalyzes the interconversion of 2-phosphoglycerate and 3-phosphoglycerate. This Salmonella paratyphi A (strain ATCC 9150 / SARB42) protein is 2,3-bisphosphoglycerate-dependent phosphoglycerate mutase.